Here is a 140-residue protein sequence, read N- to C-terminus: Large ribosomal subunit protein uL11 (140 aa).

This sequence belongs to the universal ribosomal protein uL11 family. Part of the ribosomal stalk of the 50S ribosomal subunit. Interacts with L10 and the large rRNA to form the base of the stalk. L10 forms an elongated spine to which L12 dimers bind in a sequential fashion forming a multimeric L10(L12)X complex. In terms of processing, one or more lysine residues are methylated.

Functionally, forms part of the ribosomal stalk which helps the ribosome interact with GTP-bound translation factors. The polypeptide is Large ribosomal subunit protein uL11 (Nitratidesulfovibrio vulgaris (strain ATCC 29579 / DSM 644 / CCUG 34227 / NCIMB 8303 / VKM B-1760 / Hildenborough) (Desulfovibrio vulgaris)).